Reading from the N-terminus, the 58-residue chain is UPF0391 membrane protein GM21_0108 (58 aa).

2 helical membrane-spanning segments follow: residues 4–24 (WALIFFIIAIIAAVFGFGGIA) and 33–53 (VLFYLFLVVAVVMLVSALLAG).

It belongs to the UPF0391 family.

It is found in the cell membrane. The protein is UPF0391 membrane protein GM21_0108 of Geobacter sp. (strain M21).